The sequence spans 292 residues: MIAGSMVALVTPFDAQGRLDWDSLAKLVDFHLQEGTNAIVAVGTTGESATLDVEEHIQVIRRVVDQVKGRIPVIAGTGANSTREAVALTEAAKSGGADACLLVTPYYNKPTQEGMYQHFRHIAEAVAIPQILYNVPGRTSCDMLPETVERLSKVPNIIGIKEATGDLQRAKEVIERVGKDFLVYSGDDATAVELMLLGGKGNISVTANVAPRAMSDLCAAAMRGDAAAARAINDRLMPLHKALFIESNPIPVKWALHEMGLIPEGIRLPLTWLSPRCHEPLRQAMRQTGVLA.

Residue threonine 45 participates in pyruvate binding. Catalysis depends on tyrosine 133, which acts as the Proton donor/acceptor. Lysine 161 serves as the catalytic Schiff-base intermediate with substrate. Residue isoleucine 203 coordinates pyruvate.

This sequence belongs to the DapA family. Homodimer.

The protein resides in the cytoplasm. The catalysed reaction is L-aspartate 4-semialdehyde + pyruvate = (2S,4S)-4-hydroxy-2,3,4,5-tetrahydrodipicolinate + H2O + H(+). It participates in amino-acid biosynthesis; L-lysine biosynthesis via DAP pathway; (S)-tetrahydrodipicolinate from L-aspartate: step 3/4. Catalyzes the condensation of (S)-aspartate-beta-semialdehyde [(S)-ASA] and pyruvate to 4-hydroxy-tetrahydrodipicolinate (HTPA). The protein is 4-hydroxy-tetrahydrodipicolinate synthase of Pseudomonas aeruginosa (strain ATCC 15692 / DSM 22644 / CIP 104116 / JCM 14847 / LMG 12228 / 1C / PRS 101 / PAO1).